The following is a 1109-amino-acid chain: Protein phosphatase 1 regulatory subunit 3A (1109 aa).

Phosphoserine; by GSK3 occurs at positions 40 and 44. A Phosphoserine; by PKA and ISPK modification is found at serine 48. Serine 51 carries the post-translational modification Phosphoserine. Threonine 58 is modified (phosphothreonine). Residues arginine 64–serine 67 carry the PP1-binding motif motif. Serine 67 is modified (phosphoserine; by PKA). A CBM21 domain is found at glutamine 124–valine 232. Over residues lysine 236–serine 251 the composition is skewed to basic and acidic residues. Disordered stretches follow at residues lysine 236–asparagine 278, glycine 340–serine 424, aspartate 436–proline 455, and tyrosine 493–arginine 517. Polar residues-rich tracts occupy residues glycine 340 to proline 352, lysine 360 to serine 384, and tyrosine 396 to proline 406. The residue at position 843 (serine 843) is a Phosphoserine. 2 disordered regions span residues serine 945 to lysine 985 and serine 1011 to aspartate 1048. Polar residues predominate over residues tyrosine 951–proline 963. 2 stretches are compositionally biased toward basic and acidic residues: residues lysine 966–lysine 985 and serine 1011–glutamate 1034. Polar residues predominate over residues serine 1035–aspartate 1048. A helical membrane pass occupies residues phenylalanine 1066 to alanine 1086.

In terms of assembly, interacts with PPP1CC catalytic subunit of PP1, and associates with glycogen. Phosphorylation at Ser-48 by ISPK stimulates the dephosphorylation of glycogen synthase and phosphorylase kinase. As to expression, skeletal muscle, diaphragm and cardiac muscle.

The protein localises to the membrane. In terms of biological role, seems to act as a glycogen-targeting subunit for PP1. PP1 is essential for cell division, and participates in the regulation of glycogen metabolism, muscle contractility and protein synthesis. Plays an important role in glycogen synthesis but is not essential for insulin activation of glycogen synthase. The polypeptide is Protein phosphatase 1 regulatory subunit 3A (PPP1R3A) (Oryctolagus cuniculus (Rabbit)).